The following is a 302-amino-acid chain: Digeranylgeranylglyceryl phosphate synthase (302 aa).

The next 8 membrane-spanning stretches (helical) occupy residues 21-41, 43-63, 103-123, 144-164, 167-187, 218-238, 244-264, and 282-302; these read LVVA…IYGG, IVSS…AGGY, IGLI…FAVL, IVIA…ASCM, GKVV…LLVL, AYMA…FPYI, MAYL…LAIL, and ARSA…AGLM.

It belongs to the UbiA prenyltransferase family. DGGGP synthase subfamily. Mg(2+) is required as a cofactor.

It localises to the cell membrane. It carries out the reaction sn-3-O-(geranylgeranyl)glycerol 1-phosphate + (2E,6E,10E)-geranylgeranyl diphosphate = 2,3-bis-O-(geranylgeranyl)-sn-glycerol 1-phosphate + diphosphate. It participates in membrane lipid metabolism; glycerophospholipid metabolism. Functionally, prenyltransferase that catalyzes the transfer of the geranylgeranyl moiety of geranylgeranyl diphosphate (GGPP) to the C2 hydroxyl of (S)-3-O-geranylgeranylglyceryl phosphate (GGGP). This reaction is the second ether-bond-formation step in the biosynthesis of archaeal membrane lipids. In Hyperthermus butylicus (strain DSM 5456 / JCM 9403 / PLM1-5), this protein is Digeranylgeranylglyceryl phosphate synthase.